The following is a 398-amino-acid chain: Phosphoglycerate kinase (398 aa).

Residues 21-23 (DIN), Arg37, 60-63 (HQGR), Arg117, and Arg157 contribute to the substrate site. Residues Glu332 and 357–360 (GGDT) each bind ATP.

The protein belongs to the phosphoglycerate kinase family. Monomer.

It localises to the cytoplasm. The catalysed reaction is (2R)-3-phosphoglycerate + ATP = (2R)-3-phospho-glyceroyl phosphate + ADP. Its pathway is carbohydrate degradation; glycolysis; pyruvate from D-glyceraldehyde 3-phosphate: step 2/5. In Halobacterium salinarum (strain ATCC 29341 / DSM 671 / R1), this protein is Phosphoglycerate kinase.